The chain runs to 407 residues: B3 domain-containing protein Os07g0183200 (407 aa).

Residues 124 to 227 (FVKTLMISDF…ELYVGVRRQR (104 aa)) constitute a DNA-binding region (TF-B3).

It localises to the nucleus. This Oryza sativa subsp. japonica (Rice) protein is B3 domain-containing protein Os07g0183200.